Here is a 360-residue protein sequence, read N- to C-terminus: Peptide chain release factor 1 (360 aa).

The residue at position 237 (Q237) is an N5-methylglutamine.

The protein belongs to the prokaryotic/mitochondrial release factor family. Methylated by PrmC. Methylation increases the termination efficiency of RF1.

Its subcellular location is the cytoplasm. In terms of biological role, peptide chain release factor 1 directs the termination of translation in response to the peptide chain termination codons UAG and UAA. This chain is Peptide chain release factor 1, found in Pseudomonas syringae pv. syringae (strain B728a).